The primary structure comprises 325 residues: Heat-inducible transcription repressor HrcA (325 aa).

This sequence belongs to the HrcA family.

Its function is as follows. Negative regulator of class I heat shock genes (grpE-dnaK-dnaJ and groELS operons). Prevents heat-shock induction of these operons. In Staphylococcus aureus (strain USA300), this protein is Heat-inducible transcription repressor HrcA.